Here is a 411-residue protein sequence, read N- to C-terminus: Phosphoribosylaminoimidazole-succinocarboxamide synthase, chloroplastic (411 aa).

The N-terminal 53 residues, 1–53 (MAQCVRSTLNPVRTPQSFTRKAYVKSPAFASVSFLRAVPEFNKYPKPCSLVMS), are a transit peptide targeting the chloroplast.

The protein belongs to the SAICAR synthetase family.

Its subcellular location is the plastid. It localises to the chloroplast. The enzyme catalyses 5-amino-1-(5-phospho-D-ribosyl)imidazole-4-carboxylate + L-aspartate + ATP = (2S)-2-[5-amino-1-(5-phospho-beta-D-ribosyl)imidazole-4-carboxamido]succinate + ADP + phosphate + 2 H(+). It participates in purine metabolism; IMP biosynthesis via de novo pathway; 5-amino-1-(5-phospho-D-ribosyl)imidazole-4-carboxamide from 5-amino-1-(5-phospho-D-ribosyl)imidazole-4-carboxylate: step 1/2. The polypeptide is Phosphoribosylaminoimidazole-succinocarboxamide synthase, chloroplastic (PUR7) (Arabidopsis thaliana (Mouse-ear cress)).